A 171-amino-acid polypeptide reads, in one-letter code: Large ribosomal subunit protein uL10 (171 aa).

This sequence belongs to the universal ribosomal protein uL10 family. In terms of assembly, part of the ribosomal stalk of the 50S ribosomal subunit. The N-terminus interacts with L11 and the large rRNA to form the base of the stalk. The C-terminus forms an elongated spine to which L12 dimers bind in a sequential fashion forming a multimeric L10(L12)X complex.

Forms part of the ribosomal stalk, playing a central role in the interaction of the ribosome with GTP-bound translation factors. In Rhizorhabdus wittichii (strain DSM 6014 / CCUG 31198 / JCM 15750 / NBRC 105917 / EY 4224 / RW1) (Sphingomonas wittichii), this protein is Large ribosomal subunit protein uL10.